We begin with the raw amino-acid sequence, 907 residues long: Protein translocase subunit SecA (907 aa).

ATP-binding positions include Q87, 105–109 (GEGKT), and D510. 4 residues coordinate Zn(2+): C892, C894, C903, and H904.

Belongs to the SecA family. In terms of assembly, monomer and homodimer. Part of the essential Sec protein translocation apparatus which comprises SecA, SecYEG and auxiliary proteins SecDF-YajC and YidC. Zn(2+) serves as cofactor.

The protein localises to the cell inner membrane. It localises to the cytoplasm. It catalyses the reaction ATP + H2O + cellular proteinSide 1 = ADP + phosphate + cellular proteinSide 2.. In terms of biological role, part of the Sec protein translocase complex. Interacts with the SecYEG preprotein conducting channel. Has a central role in coupling the hydrolysis of ATP to the transfer of proteins into and across the cell membrane, serving both as a receptor for the preprotein-SecB complex and as an ATP-driven molecular motor driving the stepwise translocation of polypeptide chains across the membrane. This is Protein translocase subunit SecA from Acinetobacter baumannii (strain ACICU).